Reading from the N-terminus, the 371-residue chain is Partitioning defective 6 homolog beta (371 aa).

Serine 10 and serine 11 each carry phosphoserine. Residues 16–96 enclose the PB1 domain; it reads TMEVKSKFGA…PLLRIFIQKK (81 aa). Residues 126–253 are interaction with PARD3 and CDC42; sequence RKKPHIVISM…ITVRPANQRN (128 aa). The 18-residue stretch at 133–150 folds into the Pseudo-CRIB domain; it reads ISMPQDFRPVSSIIDVDI. Residues 157-250 form the PDZ domain; sequence RVRLYKYGTE…NLIITVRPAN (94 aa). 2 disordered regions span residues 253 to 273 and 326 to 371; these read NNVV…DNSL and FESG…IITL. Residues 326-340 show a composition bias toward polar residues; the sequence is FESGQNGFSPPQDTS. Over residues 352–363 the composition is skewed to basic and acidic residues; sequence LESRAPDQKLLE.

The protein belongs to the PAR6 family. In terms of assembly, interacts with PARD3. Interacts with GTP-bound forms of CDC42, RHOQ/TC10 and RAC1. Interacts with the N-terminal part of PRKCI and PRKCZ. Part of a complex with PARD3, CDC42 or RAC1 and PRKCI or PRKCZ. Part of a complex with LLGL1 and PRKCI. Interacts with ALS2CR19. Interacts with ECT2. Interacts with PALS1. In terms of tissue distribution, expressed in pancreas and in both adult and fetal kidney. Weakly expressed in placenta and lung. Not expressed in other tissues.

It is found in the cytoplasm. Its subcellular location is the cell membrane. It localises to the cell junction. The protein localises to the tight junction. Its function is as follows. Adapter protein involved in asymmetrical cell division and cell polarization processes. Probably involved in formation of epithelial tight junctions. Association with PARD3 may prevent the interaction of PARD3 with F11R/JAM1, thereby preventing tight junction assembly. The PARD6-PARD3 complex links GTP-bound Rho small GTPases to atypical protein kinase C proteins. The sequence is that of Partitioning defective 6 homolog beta (Pard6b) from Mus musculus (Mouse).